A 456-amino-acid polypeptide reads, in one-letter code: Argininosuccinate lyase (456 aa).

This sequence belongs to the lyase 1 family. Argininosuccinate lyase subfamily.

Its subcellular location is the cytoplasm. The enzyme catalyses 2-(N(omega)-L-arginino)succinate = fumarate + L-arginine. The protein operates within amino-acid biosynthesis; L-arginine biosynthesis; L-arginine from L-ornithine and carbamoyl phosphate: step 3/3. This chain is Argininosuccinate lyase, found in Carboxydothermus hydrogenoformans (strain ATCC BAA-161 / DSM 6008 / Z-2901).